We begin with the raw amino-acid sequence, 432 residues long: Trigger factor (432 aa).

The PPIase FKBP-type domain maps to 161-246 (EDRVTIDFTG…LKKVEERELP (86 aa)).

It belongs to the FKBP-type PPIase family. Tig subfamily. As to quaternary structure, homodimer and monomer. In vivo most of the ribosomes are in complex with monomeric TF. Uncomplexed TF, however, is in a monomer-dimer equilibrium with approximately two thirds of TF existing in a dimeric state.

Its subcellular location is the cytoplasm. It carries out the reaction [protein]-peptidylproline (omega=180) = [protein]-peptidylproline (omega=0). Involved in protein export. Acts as a chaperone by maintaining the newly synthesized protein in an open conformation. Functions as a peptidyl-prolyl cis-trans isomerase. The polypeptide is Trigger factor (Escherichia coli O139:H28 (strain E24377A / ETEC)).